We begin with the raw amino-acid sequence, 310 residues long: Oxygen-dependent coproporphyrinogen-III oxidase (310 aa).

Residue Ser-93 participates in substrate binding. Residues His-97 and His-107 each contribute to the a divalent metal cation site. Catalysis depends on His-107, which acts as the Proton donor. Substrate is bound at residue Asn-109–Arg-111. A divalent metal cation is bound by residues His-146 and His-176. Residues Tyr-241–Ser-276 form an important for dimerization region. Position 259 to 261 (Gly-259 to Arg-261) interacts with substrate.

It belongs to the aerobic coproporphyrinogen-III oxidase family. In terms of assembly, homodimer. A divalent metal cation serves as cofactor.

It is found in the cytoplasm. The enzyme catalyses coproporphyrinogen III + O2 + 2 H(+) = protoporphyrinogen IX + 2 CO2 + 2 H2O. It participates in porphyrin-containing compound metabolism; protoporphyrin-IX biosynthesis; protoporphyrinogen-IX from coproporphyrinogen-III (O2 route): step 1/1. In terms of biological role, involved in the heme biosynthesis. Catalyzes the aerobic oxidative decarboxylation of propionate groups of rings A and B of coproporphyrinogen-III to yield the vinyl groups in protoporphyrinogen-IX. This is Oxygen-dependent coproporphyrinogen-III oxidase from Pseudomonas fluorescens (strain SBW25).